The chain runs to 82 residues: MSEINQTVTRRPFHRRRKTCPFSGANAPKIDYKDIKLLQRYISERGKIVPSRITAVSQKRQRELANAIKRARFLGLLPYVIK.

Residues 1–20 (MSEINQTVTRRPFHRRRKTC) form a disordered region.

The protein belongs to the bacterial ribosomal protein bS18 family. Part of the 30S ribosomal subunit. Forms a tight heterodimer with protein bS6.

Binds as a heterodimer with protein bS6 to the central domain of the 16S rRNA, where it helps stabilize the platform of the 30S subunit. The chain is Small ribosomal subunit protein bS18 from Bartonella quintana (strain Toulouse) (Rochalimaea quintana).